The sequence spans 394 residues: Class II hydrophobin TH1 (394 aa).

An N-terminal signal peptide occupies residues 1-16; that stretch reads MKFLAAASLLVASTLA. The tract at residues 17–42 is disordered; the sequence is VPTSSGGSCRPRPPPGGGNGGNGGNG. Over residues 33 to 42 the composition is skewed to gly residues; sequence GGNGGNGGNG. Residues 48–117 are hydrophobin 1; it reads GYQPCPAGLY…GQAVLCQDSI (70 aa). 4 disulfide bridges follow: C52–C101, C62–C92, C63–C75, and C102–C113. The tract at residues 135–157 is disordered; it reads GNGGNNGGNTDYPGGNGGNNGGN. A compositionally biased stretch (gly residues) spans 148–157; it reads GGNGGNNGGN. Hydrophobin regions lie at residues 200–270 and 326–394; these read GYQA…QPAI and GSFK…CTGA.

The protein belongs to the cerato-ulmin hydrophobin family. In terms of assembly, homotetramer. Further self-assembles to form highly ordered films at water-air interfaces through intermolecular interactions. Post-translationally, several N-termini starting at positions 17, 20, 22, 28 and 48 have been identified by direct sequencing. In terms of processing, contains a number of intrachain disulfide bonds. Not glycosylated.

Its subcellular location is the secreted. The protein resides in the cell wall. Aerial growth, conidiation, and dispersal of filamentous fungi in the environment rely upon a capability of their secreting small amphipathic proteins called hydrophobins (HPBs) with low sequence identity. Class I can self-assemble into an outermost layer of rodlet bundles on aerial cell surfaces, conferring cellular hydrophobicity that supports fungal growth, development and dispersal; whereas Class II form highly ordered films at water-air interfaces through intermolecular interactions but contribute nothing to the rodlet structure. TH1 is a class II hydrophobin that reduces water surface tension dramatically upon assembly at the water-air interface and plays a role in the formation of aerial hyphae. This chain is Class II hydrophobin TH1 (TH1), found in Claviceps fusiformis (Ergot fungus).